Here is a 167-residue protein sequence, read N- to C-terminus: MGMIGYFAEIDSEKINQLLESTEKPLMDNIHDTLSGLRRLDIDKRWDFLHFGLTGTSAFDPAKNDPLSRAVLGEHSLEDGIDGFLGLTWNQELAATIDRLESLDRNELRKQFSIKRLNEMEIYPGVTFSEELEGQLFASIMLDMEKLISAYRRMLRQGNHALTVIVG.

As to quaternary structure, monomer.

This chain is Protein YfbM (yfbM), found in Escherichia coli (strain K12).